The sequence spans 864 residues: Receptor like protein 24 (864 aa).

Residues 1–29 (MKTVFKSLLLLHFLLLLLLCFVSPSSFFL) form the signal peptide. Residues 30-830 (LKVPVGGLVA…EEKGEVINWK (801 aa)) are Extracellular-facing. Asparagine 61, asparagine 73, asparagine 94, and asparagine 112 each carry an N-linked (GlcNAc...) asparagine glycan. 15 LRR repeats span residues 100–125 (FHQL…FCNL), 127–148 (KLKL…DLMG), 156–182 (LGKL…LFEL), 183–205 (HSLR…KFGN), 207–229 (NKLE…TISN), 230–253 (LTRI…VQNL), 254–277 (TKLS…LFTF), 279–303 (SLST…STSS), 305–326 (LEIM…ISKL), 327–350 (INLK…LLSP), 351–376 (LKSL…SYIP), 378–398 (SMES…ILKH), 399–423 (LQNL…LWTL), 425–448 (QLSF…VFVN), and 449–472 (LSVR…PLSI). Asparagine 176, asparagine 194, asparagine 229, and asparagine 252 each carry an N-linked (GlcNAc...) asparagine glycan. Asparagine 298 carries an N-linked (GlcNAc...) asparagine glycan. Residue asparagine 338 is glycosylated (N-linked (GlcNAc...) asparagine). N-linked (GlcNAc...) asparagine glycans are attached at residues asparagine 433 and asparagine 448. One copy of the LRR 16; degenerate repeat lies at 473-492 (IGFSAIHNSFTGEIPLSICN). Asparagine 492 and asparagine 505 each carry an N-linked (GlcNAc...) asparagine glycan. 10 LRR repeats span residues 493-514 (RTSL…PQCL), 515-538 (SNFM…FYTD), 539-562 (SSLK…LLNC), 564-585 (SLRF…WLKA), 586-610 (LPNL…HQGP), 613-637 (FPEL…FFVN), 688-712 (LTSY…IGLL), 713-735 (KALI…SFAN), 736-760 (LMNL…LGSL), and 762-785 (FLVY…QITG). Residue asparagine 561 is glycosylated (N-linked (GlcNAc...) asparagine). Residue asparagine 719 is glycosylated (N-linked (GlcNAc...) asparagine). Residues 831 to 851 (AVAIGYAPGLLFGLAIAHLIA) form a helical membrane-spanning segment. At 852–864 (SYKPEWLVKIIGF) the chain is on the cytoplasmic side.

The protein belongs to the RLP family.

The protein resides in the cell membrane. This is Receptor like protein 24 from Arabidopsis thaliana (Mouse-ear cress).